Here is a 620-residue protein sequence, read N- to C-terminus: 1-deoxy-D-xylulose-5-phosphate synthase (620 aa).

Thiamine diphosphate-binding positions include histidine 80 and 121–123; that span reads GHS. Mg(2+) is bound at residue aspartate 152. Thiamine diphosphate is bound by residues 153–154, asparagine 181, tyrosine 288, and glutamate 370; that span reads GA. Position 181 (asparagine 181) interacts with Mg(2+).

This sequence belongs to the transketolase family. DXPS subfamily. As to quaternary structure, homodimer. Requires Mg(2+) as cofactor. Thiamine diphosphate serves as cofactor.

The enzyme catalyses D-glyceraldehyde 3-phosphate + pyruvate + H(+) = 1-deoxy-D-xylulose 5-phosphate + CO2. The protein operates within metabolic intermediate biosynthesis; 1-deoxy-D-xylulose 5-phosphate biosynthesis; 1-deoxy-D-xylulose 5-phosphate from D-glyceraldehyde 3-phosphate and pyruvate: step 1/1. Its function is as follows. Catalyzes the acyloin condensation reaction between C atoms 2 and 3 of pyruvate and glyceraldehyde 3-phosphate to yield 1-deoxy-D-xylulose-5-phosphate (DXP). This Escherichia coli (strain 55989 / EAEC) protein is 1-deoxy-D-xylulose-5-phosphate synthase.